Reading from the N-terminus, the 304-residue chain is MGPTASGKTDLAIALRQTLPVEVISVDSALIYKGMDIGTAKPSKAELELAPHRLIDILDPSESYSAMNFREDALREMAEITASGRIPLLAGGTMLYYKALLEGLSPLPSADPEIRAEIEAKAEQIGWSGLHRELLAIDPIAGKRINPNDSQRINRALEVFYITGKTMTELTAQQGDSLPYNVLQFAIAPQDRAVLHQRIEQRFYKMMELGFQQEVEKLRARSDLHKDLPSIRCVGYRQMWEYLDGDISLDEAIYKGICATRQLAKRQITWLRGWNSEITWLDSLDPTSSKLKMIEKIAQNSIKL.

2–9 lines the ATP pocket; the sequence is GPTASGKT. 4-9 contacts substrate; it reads TASGKT. Interaction with substrate tRNA stretches follow at residues 27–30, 151–155, 232–237, and 265–272; these read DSAL, QRINR, RCVGYR, and KRQITWLR.

This sequence belongs to the IPP transferase family. In terms of assembly, monomer. Requires Mg(2+) as cofactor.

The enzyme catalyses adenosine(37) in tRNA + dimethylallyl diphosphate = N(6)-dimethylallyladenosine(37) in tRNA + diphosphate. Functionally, catalyzes the transfer of a dimethylallyl group onto the adenine at position 37 in tRNAs that read codons beginning with uridine, leading to the formation of N6-(dimethylallyl)adenosine (i(6)A). The sequence is that of tRNA dimethylallyltransferase from Actinobacillus pleuropneumoniae serotype 5b (strain L20).